The following is a 519-amino-acid chain: 2,3-bisphosphoglycerate-independent phosphoglycerate mutase (519 aa).

Asp-9 and Ser-60 together coordinate Mn(2+). Catalysis depends on Ser-60, which acts as the Phosphoserine intermediate. Residues 76–91 (DSARVSDSIARSRGEA) are compositionally biased toward basic and acidic residues. The segment at 76-102 (DSARVSDSIARSRGEAPPDDDAQDPPF) is disordered. Residues His-134, 163–164 (RD), Arg-195, Arg-201, 267–270 (RSDR), and Lys-341 contribute to the substrate site. Mn(2+) is bound by residues Asp-408, His-412, Asp-449, His-450, and His-466.

This sequence belongs to the BPG-independent phosphoglycerate mutase family. Mn(2+) serves as cofactor.

It carries out the reaction (2R)-2-phosphoglycerate = (2R)-3-phosphoglycerate. It functions in the pathway carbohydrate degradation; glycolysis; pyruvate from D-glyceraldehyde 3-phosphate: step 3/5. Its function is as follows. Catalyzes the interconversion of 2-phosphoglycerate and 3-phosphoglycerate. This chain is 2,3-bisphosphoglycerate-independent phosphoglycerate mutase, found in Haloarcula marismortui (strain ATCC 43049 / DSM 3752 / JCM 8966 / VKM B-1809) (Halobacterium marismortui).